Consider the following 183-residue polypeptide: Ferritin heavy chain (183 aa).

Met1 carries the post-translational modification N-acetylmethionine. Thr2 carries the N-acetylthreonine; in Ferritin heavy chain, N-terminally processed modification. The region spanning 11 to 160 (QNYHQDSEAA…DHVTNLRKMG (150 aa)) is the Ferritin-like diiron domain. The Fe cation site is built by Glu28, Glu63, His66, Glu108, and Gln142. A phosphoserine mark is found at Ser179 and Ser183.

Belongs to the ferritin family. In terms of assembly, oligomer of 24 subunits. There are two types of subunits: L (light) chain and H (heavy) chain. The major chain can be light or heavy, depending on the species and tissue type. The functional molecule forms a roughly spherical shell with a diameter of 12 nm and contains a central cavity into which the insoluble mineral iron core is deposited. Interacts with NCOA4; NCOA4 promotes targeting of the iron-binding ferritin complex to autolysosomes following starvation or iron depletion.

It localises to the cytoplasm. It is found in the lysosome. Its subcellular location is the cytoplasmic vesicle. The protein localises to the autophagosome. It catalyses the reaction 4 Fe(2+) + O2 + 4 H(+) = 4 Fe(3+) + 2 H2O. Functionally, stores iron in a soluble, non-toxic, readily available form. Important for iron homeostasis. Has ferroxidase activity. Iron is taken up in the ferrous form and deposited as ferric hydroxides after oxidation. Also plays a role in delivery of iron to cells. Mediates iron uptake in capsule cells of the developing kidney. Delivery to lysosomes is mediated by the cargo receptor NCOA4 for autophagic degradation and release of iron. This Felis catus (Cat) protein is Ferritin heavy chain (FTH1).